The chain runs to 221 residues: Thiopurine S-methyltransferase (221 aa).

Residues Trp12, Leu47, Glu68, and Arg125 each contribute to the S-adenosyl-L-methionine site.

The protein belongs to the class I-like SAM-binding methyltransferase superfamily. TPMT family.

It is found in the cytoplasm. It catalyses the reaction S-adenosyl-L-methionine + a thiopurine = S-adenosyl-L-homocysteine + a thiopurine S-methylether.. The protein is Thiopurine S-methyltransferase of Legionella pneumophila subsp. pneumophila (strain Philadelphia 1 / ATCC 33152 / DSM 7513).